The sequence spans 87 residues: Phosphocarrier protein HPr (87 aa).

The region spanning 1-87 (MEKIFKVTSD…ETMKNEGLGE (87 aa)) is the HPr domain. Histidine 14 (pros-phosphohistidine intermediate; alternate) is an active-site residue. Histidine 14 bears the Tele-phosphohistidine; alternate mark. Residue serine 45 is modified to Phosphoserine; by HPrK/P.

This sequence belongs to the HPr family. Post-translationally, the form phosphorylated at the tele nitrogen (N(epsilon)2), instead of the expected pros nitrogen (N(delta)1), of His-14 is not able to transfer its phosphoryl group to the B.subtilis EIIA-Glc domain. This form may be inactive in PTS-catalyzed sugar transport or target an as yet unknown acceptor molecule in an alternative metabolic process.

The protein localises to the cytoplasm. Its activity is regulated as follows. Phosphorylation on Ser-45 inhibits the phosphoryl transfer from enzyme I to HPr. General (non sugar-specific) component of the phosphoenolpyruvate-dependent sugar phosphotransferase system (sugar PTS). This major carbohydrate active-transport system catalyzes the phosphorylation of incoming sugar substrates concomitantly with their translocation across the cell membrane. The phosphoryl group from phosphoenolpyruvate (PEP) is transferred to the phosphoryl carrier protein HPr by enzyme I. Phospho-HPr then transfers it to the PTS EIIA domain. Its function is as follows. P-Ser-HPr interacts with the catabolite control protein A (CcpA), forming a complex that binds to DNA at the catabolite response elements cre, operator sites preceding a large number of catabolite-regulated genes. Thus, P-Ser-HPr is a corepressor in carbon catabolite repression (CCR), a mechanism that allows bacteria to coordinate and optimize the utilization of available carbon sources. P-Ser-HPr mediates glucose catabolite repression of cry4A toxin expression. The polypeptide is Phosphocarrier protein HPr (ptsH) (Bacillus thuringiensis subsp. israelensis).